Here is a 105-residue protein sequence, read N- to C-terminus: Cuticle protein AMP2 (105 aa).

The interval 1-21 (DRDAQTLTDERSDQGDGNFRY) is disordered. The Chitin-binding type R&amp;R domain occupies 16 to 81 (DGNFRYEFET…PSSDLLPVGP (66 aa)).

Arthrodial membrane.

The protein is Cuticle protein AMP2 of Homarus americanus (American lobster).